A 213-amino-acid chain; its full sequence is High frequency lysogenization protein HflD (213 aa).

A coiled-coil region spans residues 99 to 126 (LSSAKGALDTLGNRINGLQRQLEHFDLQ).

The protein belongs to the HflD family. As to quaternary structure, interacts with CII protein from phage lambda.

It localises to the cytoplasm. The protein localises to the cell inner membrane. Functionally, negative regulator of phage lambda lysogenization. Contributes to the degradation of the phage regulatory protein CII. Acts probably by holding CII on the membrane surface, away from the target promoters, but close to the FtsH protease. The polypeptide is High frequency lysogenization protein HflD (Escherichia coli O157:H7).